The chain runs to 275 residues: 4-diphosphocytidyl-2-C-methyl-D-erythritol kinase (275 aa).

K14 is an active-site residue. Residue P98–S108 participates in ATP binding. The active site involves D140.

This sequence belongs to the GHMP kinase family. IspE subfamily.

It carries out the reaction 4-CDP-2-C-methyl-D-erythritol + ATP = 4-CDP-2-C-methyl-D-erythritol 2-phosphate + ADP + H(+). It participates in isoprenoid biosynthesis; isopentenyl diphosphate biosynthesis via DXP pathway; isopentenyl diphosphate from 1-deoxy-D-xylulose 5-phosphate: step 3/6. Its function is as follows. Catalyzes the phosphorylation of the position 2 hydroxy group of 4-diphosphocytidyl-2C-methyl-D-erythritol. In Francisella tularensis subsp. tularensis (strain FSC 198), this protein is 4-diphosphocytidyl-2-C-methyl-D-erythritol kinase.